We begin with the raw amino-acid sequence, 230 residues long: MKQVRLLPSATVRAACAVAVAAFAAGCAQIPRDPIIQQPMTAQPPTPMSMQAPGSIYNPGYAGRPLFEDQRPRNVGDILTIMIAENINATKSSGANTNRQGNTDFNVPTAGFLGGLFAKANLSATGNNKFAATGGASAANTFNGTITVTVTNVLPNGNLVVSGEKQMLINQGNEFVRFSGVVNPNTISGANSVYSTQVADAKIEYSAKGYINEAETMGWLQRFFLNIAPW.

The first 26 residues, 1 to 26, serve as a signal peptide directing secretion; it reads MKQVRLLPSATVRAACAVAVAAFAAG. Cys27 carries N-palmitoyl cysteine lipidation. Cys27 carries S-diacylglycerol cysteine lipidation.

Belongs to the FlgH family. As to quaternary structure, the basal body constitutes a major portion of the flagellar organelle and consists of four rings (L,P,S, and M) mounted on a central rod.

It localises to the cell outer membrane. Its subcellular location is the bacterial flagellum basal body. Its function is as follows. Assembles around the rod to form the L-ring and probably protects the motor/basal body from shearing forces during rotation. The polypeptide is Flagellar L-ring protein (Burkholderia lata (strain ATCC 17760 / DSM 23089 / LMG 22485 / NCIMB 9086 / R18194 / 383)).